A 509-amino-acid polypeptide reads, in one-letter code: Zinc finger protein Aiolos (509 aa).

Over residues 1–19 (MEDIQTNAELKSTQEQSVP) the composition is skewed to polar residues. Residues 1–86 (MEDIQTNAEL…MGNAEEPEIP (86 aa)) are disordered. 2 positions are modified to phosphoserine: serine 22 and serine 42. Basic and acidic residues predominate over residues 56–72 (DSMKVKDEYSERDENVL). Residues lysine 61, lysine 73, and lysine 100 each participate in a glycyl lysine isopeptide (Lys-Gly) (interchain with G-Cter in SUMO2) cross-link. C2H2-type zinc fingers lie at residues 118-140 (MNCD…KRSH), 146-168 (FQCN…IKLH), and 174-196 (FKCH…LRTH). Residues 202-224 (YKCEFCGRSYKQRSSLEEHKERC) form a C2H2-type 4; atypical zinc finger. A Glycyl lysine isopeptide (Lys-Gly) (interchain with G-Cter in SUMO2) cross-link involves residue lysine 245. Phosphothreonine is present on threonine 326. A disordered region spans residues 364 to 394 (IHLPEKSVPSERGLSPNNSGHDSTDTDSNHE). Serine 378 is modified (phosphoserine). Over residues 385–394 (DSTDTDSNHE) the composition is skewed to basic and acidic residues. The segment at 452 to 474 (YRCDHCRVLFLDYVMFTIHMGCH) adopts a C2H2-type 5 zinc-finger fold. Residues 452–504 (YRCDHCRVLFLDYVMFTIHMGCHGFRDPFECNMCGYRSHDRYEFSSHIARGEH) are mediates homodimerization and heterodimerization. The segment at 480-504 (FECNMCGYRSHDRYEFSSHIARGEH) adopts a C2H2-type 6; atypical zinc-finger fold.

The protein belongs to the Ikaros C2H2-type zinc-finger protein family. Homodimer. Heterodimer with other IKAROS family members. Interacts with IKZF4 and IKZF5. Interacts with IKZF1. Interacts with HRAS. Interacts with FOXP3; this interaction may be required for silencing target genes and regulating the suppressive activity of FOXP3-positive regulatory T-cells (Treg). Interacts with BCL21L isoform Bcl-X(L); this interaction blocks the anti-apoptotic role of BCL21L. Associates with histone deacetylase complexes containing HDAC1, MTA2 and SIN3A. In terms of processing, phosphorylation on tyrosine residues induced by IL2 is required for dissociation from HRAS and nuclear translocation of IKZF3 in T-cells. Phosphorylation on tyrosine residues induced by IL4 is required for dissociation from Bcl-X(L) in T-cells. In terms of tissue distribution, expressed most strongly in peripheral blood leukocytes, the spleen, and the thymus.

It localises to the nucleus. The protein localises to the cytoplasm. Functionally, transcription factor that plays an important role in the regulation of lymphocyte differentiation. Plays an essential role in regulation of B-cell differentiation, proliferation and maturation to an effector state. Involved in regulating BCL2 expression and controlling apoptosis in T-cells in an IL2-dependent manner. This Homo sapiens (Human) protein is Zinc finger protein Aiolos (IKZF3).